The primary structure comprises 246 residues: 4-aminobenzoate synthase (246 aa).

6 residues coordinate Fe(2+): glutamate 88, histidine 95, glutamate 149, histidine 181, aspartate 185, and histidine 188.

This sequence belongs to the CADD family. Homodimer. Fe(2+) serves as cofactor. Mn(2+) is required as a cofactor.

Involved in de novo para-aminobenzoate (PABA) biosynthesis. Acts as a self-sacrificing or 'suicide' enzyme that utilizes its own active site tyrosine residue(s) as the substrate for PABA synthesis. The side chain of the tyrosine residue is released from the protein backbone via cleavage of the C(alpha)-C(beta) bond, leaving a glycine in place of the original tyrosine residue. Reaction requires O(2) and a reduced dimetal cofactor. The protein is 4-aminobenzoate synthase of Nitrosomonas europaea (strain ATCC 19718 / CIP 103999 / KCTC 2705 / NBRC 14298).